Reading from the N-terminus, the 350-residue chain is Holliday junction branch migration complex subunit RuvB (350 aa).

The interval 1 to 183 (MSAERLVNPH…FVAVHRLVFY (183 aa)) is large ATPase domain (RuvB-L). ATP is bound by residues leucine 22, arginine 23, glycine 64, lysine 67, threonine 68, serine 69, 130–132 (EDF), arginine 173, tyrosine 183, and arginine 220. Threonine 68 provides a ligand contact to Mg(2+). The small ATPAse domain (RuvB-S) stretch occupies residues 184–254 (SDDAMTEIVS…VARDALAQLE (71 aa)). Residues 257-350 (ELGLDENDRR…ESGPQQATLF (94 aa)) form a head domain (RuvB-H) region. Arginine 312 and arginine 317 together coordinate DNA. The segment at 331–350 (YPERTLPADDESGPQQATLF) is disordered.

The protein belongs to the RuvB family. As to quaternary structure, homohexamer. Forms an RuvA(8)-RuvB(12)-Holliday junction (HJ) complex. HJ DNA is sandwiched between 2 RuvA tetramers; dsDNA enters through RuvA and exits via RuvB. An RuvB hexamer assembles on each DNA strand where it exits the tetramer. Each RuvB hexamer is contacted by two RuvA subunits (via domain III) on 2 adjacent RuvB subunits; this complex drives branch migration. In the full resolvosome a probable DNA-RuvA(4)-RuvB(12)-RuvC(2) complex forms which resolves the HJ.

The protein resides in the cytoplasm. The catalysed reaction is ATP + H2O = ADP + phosphate + H(+). Its function is as follows. The RuvA-RuvB-RuvC complex processes Holliday junction (HJ) DNA during genetic recombination and DNA repair, while the RuvA-RuvB complex plays an important role in the rescue of blocked DNA replication forks via replication fork reversal (RFR). RuvA specifically binds to HJ cruciform DNA, conferring on it an open structure. The RuvB hexamer acts as an ATP-dependent pump, pulling dsDNA into and through the RuvAB complex. RuvB forms 2 homohexamers on either side of HJ DNA bound by 1 or 2 RuvA tetramers; 4 subunits per hexamer contact DNA at a time. Coordinated motions by a converter formed by DNA-disengaged RuvB subunits stimulates ATP hydrolysis and nucleotide exchange. Immobilization of the converter enables RuvB to convert the ATP-contained energy into a lever motion, pulling 2 nucleotides of DNA out of the RuvA tetramer per ATP hydrolyzed, thus driving DNA branch migration. The RuvB motors rotate together with the DNA substrate, which together with the progressing nucleotide cycle form the mechanistic basis for DNA recombination by continuous HJ branch migration. Branch migration allows RuvC to scan DNA until it finds its consensus sequence, where it cleaves and resolves cruciform DNA. This is Holliday junction branch migration complex subunit RuvB from Chloroflexus aurantiacus (strain ATCC 29366 / DSM 635 / J-10-fl).